We begin with the raw amino-acid sequence, 397 residues long: Elongation factor Tu (397 aa).

The 197-residue stretch at 10 to 206 (KPHVNIGTIG…AVDQNIPEPQ (197 aa)) folds into the tr-type G domain. Residues 19–26 (GHIDHGKT) form a G1 region. 19–26 (GHIDHGKT) contacts GTP. Position 26 (threonine 26) interacts with Mg(2+). The interval 62–66 (GITIS) is G2. Residues 83–86 (DCPG) form a G3 region. GTP is bound by residues 83-87 (DCPGH) and 138-141 (NKSD). A G4 region spans residues 138 to 141 (NKSD). Residues 176 to 178 (SAL) form a G5 region.

It belongs to the TRAFAC class translation factor GTPase superfamily. Classic translation factor GTPase family. EF-Tu/EF-1A subfamily. In terms of assembly, monomer.

It localises to the cytoplasm. The catalysed reaction is GTP + H2O = GDP + phosphate + H(+). Its function is as follows. GTP hydrolase that promotes the GTP-dependent binding of aminoacyl-tRNA to the A-site of ribosomes during protein biosynthesis. The polypeptide is Elongation factor Tu (Thermobifida fusca (strain YX)).